Reading from the N-terminus, the 455-residue chain is MESCYVVWSSYFLQLKLTAPILLKPREIRCLRTGLSILSQQSTFVCMCRDEGSFTAAYFTYIDLRDCGNVTLAVQNISDVDLDLKQFPLIINLFAFFLPSINLVSLPVQIVERMEHNYIPHGECRAQFILYGSQTKLRAHIKRIRWTELQHEEPTHYMYACEFWIDLQTTPPDQIFNSAKVEFISSRNVYFKQIMLHEKILVIRASYENNYLLNPDNFPSDIFFQVNFIQTIPHIVMERNQEPVMTYDGTCITVGSTKNINSNTTDPFSCTFPTFFDSKQKFAGLFIPRLINGISLNTFTWKERTHLQVTMRAYKKNCRIDYSQELGKLIFLPSQIVTHDQSNIDFGWTETSRILISNQNNQISVFRSETTPVADSPVLSTVPNITAATNVSINLNSLHLNIAKEHLVPVRYRMRTDNLRTFLPITALPHTLTVLEGNIGLQTVPCPSGNRDINA.

It belongs to the herpesviridae UL82 family.

The chain is Protein U54 (U54) from Homo sapiens (Human).